The chain runs to 221 residues: uncharacterized protein (221 aa).

A disordered region spans residues 1-22 (MGLDNFTAPSTGTTPAGSPFLR). Positions 7 to 16 (TAPSTGTTPA) are enriched in polar residues.

It belongs to the IIV-6 259R family.

This is an uncharacterized protein from Invertebrate iridescent virus 3 (IIV-3).